The sequence spans 357 residues: U5 small nuclear ribonucleoprotein 40 kDa protein (357 aa).

Lysine 18 is covalently cross-linked (Glycyl lysine isopeptide (Lys-Gly) (interchain with G-Cter in SUMO2)). Arginine 21 bears the Asymmetric dimethylarginine mark. 7 WD repeats span residues 64–103 (GHEG…GNYA), 107–146 (GYSG…RVKR), 149–189 (GHTS…AIQT), 191–230 (QNTY…LTYT), 233–272 (GHAD…PKER), 283–322 (NFEK…ILYK), and 325–357 (GHAG…GEIQ). A Glycyl lysine isopeptide (Lys-Gly) (interchain with G-Cter in SUMO2) cross-link involves residue lysine 270.

Component of the pre-catalytic and catalytic spliceosome complexes. Component of the postcatalytic spliceosome P complex. Part of the U5 snRNP complex. Interacts with PRPF8. Component of the U4/U6-U5 tri-snRNP complex composed of the U4, U6 and U5 snRNAs and at least PRPF3, PRPF4, PRPF6, PRPF8, PRPF31, SNRNP200, TXNL4A, WDR57, SNRNP40, DDX23, CD2BP2, PPIH, SNU13, EFTUD2, SART1 and USP39. Component of the minor spliceosome, which splices U12-type introns.

Its subcellular location is the nucleus. Its function is as follows. Required for pre-mRNA splicing as component of the activated spliceosome. Component of the U5 small nuclear ribonucleoprotein (snRNP) complex and the U4/U6-U5 tri-snRNP complex, building blocks of the spliceosome. As a component of the minor spliceosome, involved in the splicing of U12-type introns in pre-mRNAs. This is U5 small nuclear ribonucleoprotein 40 kDa protein (SNRNP40) from Pongo abelii (Sumatran orangutan).